Consider the following 179-residue polypeptide: Large ribosomal subunit protein uL5 (179 aa).

The protein belongs to the universal ribosomal protein uL5 family. In terms of assembly, part of the 50S ribosomal subunit; part of the 5S rRNA/L5/L18/L25 subcomplex. Contacts the 5S rRNA and the P site tRNA. Forms a bridge to the 30S subunit in the 70S ribosome.

In terms of biological role, this is one of the proteins that bind and probably mediate the attachment of the 5S RNA into the large ribosomal subunit, where it forms part of the central protuberance. In the 70S ribosome it contacts protein S13 of the 30S subunit (bridge B1b), connecting the 2 subunits; this bridge is implicated in subunit movement. Contacts the P site tRNA; the 5S rRNA and some of its associated proteins might help stabilize positioning of ribosome-bound tRNAs. This is Large ribosomal subunit protein uL5 from Chromohalobacter salexigens (strain ATCC BAA-138 / DSM 3043 / CIP 106854 / NCIMB 13768 / 1H11).